Here is a 1214-residue protein sequence, read N- to C-terminus: Sodium bicarbonate cotransporter 3 (1214 aa).

Over residues 1–12 (MERFRLEKKLPG) the composition is skewed to basic and acidic residues. 2 disordered regions span residues 1–22 (MERF…VDLG) and 52–93 (SKES…PSQR). At 1–608 (MERFRLEKKL…DFKDALSLQC (608 aa)) the chain is on the extracellular side. Ser-52, Ser-55, Ser-84, Ser-150, Leu-165, and Cys-168 each carry phosphoserine. Residues 55–72 (SRRRHRHRGHKHHHRRRK) are compositionally biased toward basic residues. Residues 73–85 (DKESDKEDGRESP) are compositionally biased toward basic and acidic residues. Residue Asn-171 is glycosylated (N-linked (GlcNAc...) asparagine). Ser-233, Ser-242, Ser-255, Arg-258, Ser-260, Thr-263, Gly-264, and Ala-267 each carry phosphoserine. A glycan (N-linked (GlcNAc...) asparagine) is linked at Asn-269. 3 disordered regions span residues 289-346 (SRAG…IPTV), 362-408 (EEQK…ENST), and 552-572 (FHNG…HHAG). Over residues 303-313 (VPTPQNSPPSS) the composition is skewed to pro residues. Positions 314–332 (PSISRLTSRSSQESQRQAP) are enriched in low complexity. The span at 379–392 (SPQSAPGNLDNSKS) shows a compositional bias: polar residues. The residue at position 382 (Ser-382) is a Phosphoserine. N-linked (GlcNAc...) asparagine glycosylation is present at Asn-398. Phosphoserine is present on residues Ser-400 and Ser-403. N-linked (GlcNAc...) asparagine glycosylation occurs at Asn-406. A phosphoserine mark is found at Ser-407 and Ser-556. Phosphothreonine is present on Thr-557. The span at 563-572 (TPKEAAHHAG) shows a compositional bias: basic and acidic residues. Residues 609 to 629 (LASILFLYCACMSPVITFGGL) traverse the membrane as a helical segment. The Cytoplasmic portion of the chain corresponds to 630–637 (LGEATEGR). The chain crosses the membrane as a helical span at residues 638 to 658 (ISAIESLFGASLTGIAYSLFA). At 659–695 (GQPLTILGSTGPVLVFEKILYKFCRDYQLSYLSLRTS) the chain is on the extracellular side. The helical transmembrane segment at 696-716 (IGLWTSFLCIVLVATDASSLV) threads the bilayer. Over 717-725 (CYITRFTEE) the chain is Cytoplasmic. A helical membrane pass occupies residues 726–746 (AFAALICIIFIYEALEKLFDL). Lys-742 carries the post-translational modification Phosphoserine. At 747-817 (GETYAFNMHN…VFLGSACGHH (71 aa)) the chain is on the extracellular side. A disulfide bridge connects residues Cys-766 and Cys-768. A phosphoserine mark is found at Pro-771 and Pro-774. Asn-776 is a glycosylation site (N-linked (GlcNAc...) asparagine). Ala-780 is modified (phosphoserine). N-linked (GlcNAc...) asparagine glycosylation is found at Asn-786 and Asn-791. Cysteines 802 and 814 form a disulfide. A helical transmembrane segment spans residues 818–838 (GPYIPDVLFWCVILFFTTFFL). Residues 839-861 (SSFLKQFKTKRYFPTKVRSTISD) lie on the Cytoplasmic side of the membrane. Residues 862-882 (FAVFLTIVIMVTIDYLVGVPS) form a helical membrane-spanning segment. At 883–908 (PKLHVPEKFEPTHPERGWIISPLGDN) the chain is on the extracellular side. Residues 909–929 (PWWTLLIAAIPALLCTILIFM) traverse the membrane as a helical segment. Residues 930 to 954 (DQQITAVIINRKEHKLKKGAGYHLD) are Cytoplasmic-facing. A helical transmembrane segment spans residues 955–975 (LLMVGVMLGVCSVMGLPWFVA). Residues 976 to 1011 (ATVLSISHVNSLKVESECSAPGEQPKFLGIREQRVT) are Extracellular-facing. A phosphoserine mark is found at Glu-1007, Val-1010, and Phe-1016. 2 essential for cell membrane localization and transport activity regions span residues 1008–1131 (QRVT…KREL) and 1127–1214 (TKRE…ETSL). The chain crosses the membrane as a helical span at residues 1012-1032 (GLMIFILMGLSVFMTSVLKFI). The Cytoplasmic portion of the chain corresponds to 1033–1034 (PM). A helical membrane pass occupies residues 1035–1055 (PVLYGVFLYMGVSSLKGIQLF). At 1056-1092 (DRIKLFGMPAKHQPDLIYLRYVPLWKVHIFTVIQLTC) the chain is on the extracellular side. 8 positions are modified to phosphoserine: Tyr-1073, Val-1077, Ser-1102, Ala-1105, Val-1106, Pro-1109, Met-1111, and Leu-1115. The helical transmembrane segment at 1093 to 1113 (LVLLWVIKVSAAAVVFPMMVL) threads the bilayer. Topologically, residues 1114–1214 (ALVFVRKLMD…KKYVDAETSL (101 aa)) are cytoplasmic. Positions 1134 to 1136 (LDD) are CA2-binding. Residues 1144 to 1162 (KKEDDKKKKEKEEAERMLQ) are compositionally biased toward basic and acidic residues. The interval 1144–1169 (KKEDDKKKKEKEEAERMLQDDDDTVH) is disordered. Thr-1167 carries the post-translational modification Phosphothreonine. Residues Ser-1176, Ser-1188, Asp-1201, and Ser-1213 each carry the phosphoserine modification. The PDZ-binding signature appears at 1211–1214 (ETSL).

Belongs to the anion exchanger (TC 2.A.31) family. Interacts with CFTR through NHERF1/EBP50. Interacts with USH1C. Forms a complex with ATP6V1B1 and NHERF1/EBP50. Interacts in a pH dependent-manner with CA2/carbonic anhydrase 2. In terms of tissue distribution, highly expressed in testis and spleen. Also expressed in retina, colon, small intestine, ovary, thymus, prostate, muscle, heart and kidney. As to expression, expressed in skeletal muscle and heart muscle.

The protein resides in the basolateral cell membrane. The protein localises to the apical cell membrane. It is found in the cell projection. It localises to the stereocilium. Its subcellular location is the cell membrane. The enzyme catalyses hydrogencarbonate(in) + Na(+)(in) = hydrogencarbonate(out) + Na(+)(out). Transporter activity is regulated by CA2/carbonic anhydrase 2, cAMP and PKA. Insensitive to stilbene derivatives. Inhibited by 5-(N-ethyl-N-isopropyl)-amiloride (EIPA). Electroneutral sodium- and bicarbonate-dependent cotransporter with a Na(+):HCO3(-) 1:1 stoichiometry. Mediates the sodium-dependent bicarbonate transport important for pH recovery after acid load as well as for regulation of steady-state pH in the duodenum and vascular smooth muscle cells. Plays a key role in macrophage acidification, mediating bicarbonate import into the cytoplasm which is crucial for net acid extrusion and maintenance of cytoplasmic pH during phagocytosis. Provides cellular bicarbonate for de novo purine and pyrimidine synthesis and is a key mediator of de novo nucleotide synthesis downstream of mTORC1 signaling in proliferating cells. In terms of biological role, plays a key role in macrophage acidification, mediating bicarbonate import into the cytoplasm which is crucial for net acid extrusion and maintenance of cytoplasmic pH during phagocytosis. This chain is Sodium bicarbonate cotransporter 3 (SLC4A7), found in Homo sapiens (Human).